Reading from the N-terminus, the 440-residue chain is Argininosuccinate lyase (440 aa).

It belongs to the lyase 1 family. Argininosuccinate lyase subfamily.

The protein localises to the cytoplasm. The enzyme catalyses 2-(N(omega)-L-arginino)succinate = fumarate + L-arginine. It participates in amino-acid biosynthesis; L-arginine biosynthesis; L-arginine from L-ornithine and carbamoyl phosphate: step 3/3. In Clostridium botulinum (strain Okra / Type B1), this protein is Argininosuccinate lyase.